The following is an 80-amino-acid chain: Late cornified envelope protein 6A (80 aa).

Residues 1–10 (MSQQKQQSWK) show a composition bias toward polar residues. Disordered regions lie at residues 1 to 21 (MSQQKQQSWKPPNVPKCSPPQ) and 35 to 60 (GAPHSEGCHSSSQRPEVQKPRRARQK).

Belongs to the LCE family.

Precursors of the cornified envelope of the stratum corneum. This Homo sapiens (Human) protein is Late cornified envelope protein 6A (LCE6A).